Consider the following 457-residue polypeptide: tRNA modification GTPase MnmE (457 aa).

Residues R23, E85, and R124 each coordinate (6S)-5-formyl-5,6,7,8-tetrahydrofolate. Residues 220 to 376 (GALVVLAGQV…LVTAIRAAVL (157 aa)) form the TrmE-type G domain. N230 provides a ligand contact to K(+). GTP contacts are provided by residues 230-235 (NAGKSS), 249-255 (TDLPGTT), and 274-277 (DTAG). Mg(2+) is bound at residue S234. Residues T249, L251, and T254 each contribute to the K(+) site. T255 serves as a coordination point for Mg(2+). Residue K457 coordinates (6S)-5-formyl-5,6,7,8-tetrahydrofolate.

It belongs to the TRAFAC class TrmE-Era-EngA-EngB-Septin-like GTPase superfamily. TrmE GTPase family. As to quaternary structure, homodimer. Heterotetramer of two MnmE and two MnmG subunits. K(+) is required as a cofactor.

It is found in the cytoplasm. In terms of biological role, exhibits a very high intrinsic GTPase hydrolysis rate. Involved in the addition of a carboxymethylaminomethyl (cmnm) group at the wobble position (U34) of certain tRNAs, forming tRNA-cmnm(5)s(2)U34. This Nitratidesulfovibrio vulgaris (strain DP4) (Desulfovibrio vulgaris) protein is tRNA modification GTPase MnmE.